We begin with the raw amino-acid sequence, 266 residues long: Ribosomal RNA small subunit methyltransferase A (266 aa).

Asn-12, Leu-14, Gly-39, Glu-61, Asp-87, and Asn-107 together coordinate S-adenosyl-L-methionine.

This sequence belongs to the class I-like SAM-binding methyltransferase superfamily. rRNA adenine N(6)-methyltransferase family. RsmA subfamily.

The protein localises to the cytoplasm. It carries out the reaction adenosine(1518)/adenosine(1519) in 16S rRNA + 4 S-adenosyl-L-methionine = N(6)-dimethyladenosine(1518)/N(6)-dimethyladenosine(1519) in 16S rRNA + 4 S-adenosyl-L-homocysteine + 4 H(+). Functionally, specifically dimethylates two adjacent adenosines (A1518 and A1519) in the loop of a conserved hairpin near the 3'-end of 16S rRNA in the 30S particle. May play a critical role in biogenesis of 30S subunits. This is Ribosomal RNA small subunit methyltransferase A from Nitratidesulfovibrio vulgaris (strain DP4) (Desulfovibrio vulgaris).